The chain runs to 278 residues: 3-methyl-2-oxobutanoate hydroxymethyltransferase (278 aa).

Mg(2+) is bound by residues aspartate 52 and aspartate 91. 3-methyl-2-oxobutanoate is bound by residues 52–53 (DS), aspartate 91, and lysine 121. Position 123 (glutamate 123) interacts with Mg(2+). Glutamate 190 serves as the catalytic Proton acceptor.

The protein belongs to the PanB family. As to quaternary structure, homodecamer; pentamer of dimers. Requires Mg(2+) as cofactor.

It is found in the cytoplasm. The enzyme catalyses 3-methyl-2-oxobutanoate + (6R)-5,10-methylene-5,6,7,8-tetrahydrofolate + H2O = 2-dehydropantoate + (6S)-5,6,7,8-tetrahydrofolate. Its pathway is cofactor biosynthesis; (R)-pantothenate biosynthesis; (R)-pantoate from 3-methyl-2-oxobutanoate: step 1/2. Its function is as follows. Catalyzes the reversible reaction in which hydroxymethyl group from 5,10-methylenetetrahydrofolate is transferred onto alpha-ketoisovalerate to form ketopantoate. This Rhodospirillum rubrum (strain ATCC 11170 / ATH 1.1.1 / DSM 467 / LMG 4362 / NCIMB 8255 / S1) protein is 3-methyl-2-oxobutanoate hydroxymethyltransferase.